The sequence spans 279 residues: S-formylglutathione hydrolase (279 aa).

Catalysis depends on charge relay system residues serine 150, aspartate 226, and histidine 258.

Belongs to the esterase D family.

The catalysed reaction is S-formylglutathione + H2O = formate + glutathione + H(+). Functionally, serine hydrolase involved in the detoxification of formaldehyde. Hydrolyzes S-formylglutathione to glutathione and formate. The chain is S-formylglutathione hydrolase (fghA) from Paracoccus denitrificans (strain Pd 1222).